The sequence spans 148 residues: Lipoprotein MlpA (148 aa).

Positions 1 to 17 (MKIINILFCLFLLLLNS) are cleaved as a signal peptide. Cys-18 carries the N-palmitoyl cysteine lipid modification. A lipid anchor (S-diacylglycerol cysteine) is attached at Cys-18. The interval 26-58 (LKNNAQQTKSRGKRDLTQKEATPEKPKSKEELL) is disordered. Residues 38–58 (KRDLTQKEATPEKPKSKEELL) show a composition bias toward basic and acidic residues.

This sequence belongs to the Multicopy lipoprotein (Mlp) family.

It localises to the cell outer membrane. Its function is as follows. An outer membrane protein that may participate in pathogenesis. Some human Lyme disease patients have antibodies against this protein. The Mlp proteins probably undergo intragenic recombination, generating new alleles. The chain is Lipoprotein MlpA (mlpA) from Borreliella burgdorferi (strain ATCC 35210 / DSM 4680 / CIP 102532 / B31) (Borrelia burgdorferi).